The primary structure comprises 422 residues: MECDVINRILNEEDLFDCIKRKSKLTYEVNVGNVIIGGNNPIVVQSMALGGSGDANKDAHEVLELAKAGSELVRVAVNSEQAIKNIPYIRDVLVDNGFDHKMIIGCGQYEIARLVKEYPECASALGKIRINPGNIGFGNKRDKNFEDVIEFAIKYDIPIRIGVNWGSLDKYLASKLMNDNALLSNPKPDYIVLQKALVISAVTSAKRAEEIGLSKNKIVISCKTSKIQDLIPVYTVLSNVCNYPLHLGLTEAGSGIKGVVGSVAGISYLLLNGIGDTIRVSLTQQPGESRTTEVKLCQEILQSIGLKNFNAQVTSCPGCNRTNPKYFHQLVKDVNDYIADRMPVWRNTNPGAKDMVVAVMGCIVNGPGESKHANLGISLPGYGERPVAAVYQDGEKLCTLEGKNIFEQFVSIIENYVSVNYQ.

Residues Cys-316, Cys-319, Cys-362, and Glu-369 each coordinate [4Fe-4S] cluster.

The protein belongs to the IspG family. It depends on [4Fe-4S] cluster as a cofactor.

It carries out the reaction (2E)-4-hydroxy-3-methylbut-2-enyl diphosphate + oxidized [flavodoxin] + H2O + 2 H(+) = 2-C-methyl-D-erythritol 2,4-cyclic diphosphate + reduced [flavodoxin]. Its pathway is isoprenoid biosynthesis; isopentenyl diphosphate biosynthesis via DXP pathway; isopentenyl diphosphate from 1-deoxy-D-xylulose 5-phosphate: step 5/6. Converts 2C-methyl-D-erythritol 2,4-cyclodiphosphate (ME-2,4cPP) into 1-hydroxy-2-methyl-2-(E)-butenyl 4-diphosphate. The sequence is that of 4-hydroxy-3-methylbut-2-en-1-yl diphosphate synthase (flavodoxin) from Ehrlichia canis (strain Jake).